The sequence spans 244 residues: MNQVKTNITRNFPHISRVMIWDLDGTIINSFHRVAPCFDSEGNLDLNKYKNEACKHDLIMQDTLLPLVTYMRQCMNDANTLNIICTARLMSKSDYYYLRKQGLRGRGDSNIRVFSRDTLHKYFEADKVSEIYHSKDAVYKSYYFGLFKQLYPNADFTMIDDHKGVLSAAASYGFKTLDAQAVNDILSIGVTLIGETFIDESLEDDNDYQFLADRLQLCWEGMTEEERAEYSCSPQQYIEKLKVA.

The enzyme catalyses a 2'-deoxyribonucleoside 5'-phosphate + H2O = a 2'-deoxyribonucleoside + phosphate. Following host DNA degradation, is responsible for the degradation of 5'-dNMP's to deoxynucleosides that can be further excreted. Active on deoxynucleoside 5'-monophosphates but not active as a phosphatase on ribonucleotides, deoxynucleoside 5'-triphosphates, deoxynucleoside 3'-monophosphates, or deoxyoligonucleotides. This chain is 5'-deoxynucleotidase (dmp), found in Escherichia coli (Enterobacteria phage T5).